The following is a 275-amino-acid chain: Large ribosomal subunit protein uL2 (275 aa).

The tract at residues 222 to 275 is disordered; sequence GVAMNPVDHPHGGGEGRNKGRHPTSPWGQKSKGLKTRNNKRTDSMIIRRRAKKK. Residues 229–239 are compositionally biased toward basic and acidic residues; that stretch reads DHPHGGGEGRN.

The protein belongs to the universal ribosomal protein uL2 family. In terms of assembly, part of the 50S ribosomal subunit. Forms a bridge to the 30S subunit in the 70S ribosome.

One of the primary rRNA binding proteins. Required for association of the 30S and 50S subunits to form the 70S ribosome, for tRNA binding and peptide bond formation. It has been suggested to have peptidyltransferase activity; this is somewhat controversial. Makes several contacts with the 16S rRNA in the 70S ribosome. In Psychrobacter arcticus (strain DSM 17307 / VKM B-2377 / 273-4), this protein is Large ribosomal subunit protein uL2.